A 1047-amino-acid polypeptide reads, in one-letter code: Jouberin (1047 aa).

Composition is skewed to basic and acidic residues over residues 1–17, 29–40, and 77–86; these read MEPE…EKVR, SREKTGIEEKGE, and LLHDDKLASE. 2 disordered regions span residues 1–40 and 67–181; these read MEPE…EKGE and EQLT…SRDS. Residues 1–284 form an interaction with HAP1 region; it reads MEPETPEKVD…IFNENFPYLL (284 aa). A compositionally biased stretch (low complexity) spans 96–106; that stretch reads PVPTKPESSPS. Basic and acidic residues predominate over residues 115–138; the sequence is GEQKKEGTPEDSQHMEGICSREQD. Residues 149 to 159 show a composition bias toward basic residues; it reads PKPKKTKKKTK. Residues 172-181 are compositionally biased toward basic and acidic residues; it reads GVHEITSRDS. 7 WD repeats span residues 457 to 499, 502 to 541, 545 to 585, 592 to 631, 648 to 687, 691 to 730, and 735 to 776; these read AGER…FMRE, GHLN…TSTF, PHPS…DAAI, VHKS…NDVQ, FRGV…ARKF, ANYR…QVAM, and PFKS…AQQE. The residue at position 853 (serine 853) is a Phosphoserine. The SH3 domain maps to 902 to 962; it reads DPPPMVVALY…PANHVASETL (61 aa). 2 stretches are compositionally biased toward basic and acidic residues: residues 963 to 987 and 1013 to 1040; these read YRDS…KPEK and HSEK…EPVV. The segment at 963–1047 is disordered; that stretch reads YRDSPPKVKE…PVVRKVTLIE (85 aa). At serine 974 the chain carries Phosphoserine.

As to quaternary structure, self-associates. Part of the tectonic-like complex (also named B9 complex). Interacts with MKS1. Interacts with NPHP1; probably as heterodimers and/or AHI1(2):NPHP1(2) heterotetramers. Interacts (via SH3 domain) with the dynamin GTPase DNM2. Interacts with HAP1; probably as AHI1(2):HAP1(2) heterotetramers. Interacts with RAB8A. Interacts with CEND1. Interacts with SPATA7. As to expression, expressed in the retina (at protein level). Highly expressed in the brain. Highly expressed in the testis. Expressed in the kidney, thymus, heart, lung, spleen. Weakly expressed in the liver, stomach, pancreas, and embryo. Strongly expressed during periods of both cortical and cerebellar development.

The protein resides in the cytoplasm. Its subcellular location is the cytoskeleton. It localises to the cilium basal body. The protein localises to the microtubule organizing center. It is found in the centrosome. The protein resides in the centriole. Its subcellular location is the cell junction. It localises to the adherens junction. Functionally, involved in vesicle trafficking and required for ciliogenesis, formation of primary non-motile cilium, and recruitment of RAB8A to the basal body of primary cilium. Component of the tectonic-like complex, a complex localized at the transition zone of primary cilia and acting as a barrier that prevents diffusion of transmembrane proteins between the cilia and plasma membranes. Involved in neuronal differentiation. As a positive modulator of classical Wnt signaling, may play a crucial role in ciliary signaling during cerebellum embryonic development. The polypeptide is Jouberin (Ahi1) (Mus musculus (Mouse)).